A 318-amino-acid polypeptide reads, in one-letter code: Pantothenate kinase (318 aa).

96-103 (GSVAVGKS) is an ATP binding site.

It belongs to the prokaryotic pantothenate kinase family.

The protein localises to the cytoplasm. It carries out the reaction (R)-pantothenate + ATP = (R)-4'-phosphopantothenate + ADP + H(+). The protein operates within cofactor biosynthesis; coenzyme A biosynthesis; CoA from (R)-pantothenate: step 1/5. The protein is Pantothenate kinase of Nitrobacter hamburgensis (strain DSM 10229 / NCIMB 13809 / X14).